Reading from the N-terminus, the 83-residue chain is Large ribosomal subunit protein bL27 (83 aa).

Residues 1 to 25 form a disordered region; that stretch reads MAHKKGQGASRNGRDSESKRLGLKV.

It belongs to the bacterial ribosomal protein bL27 family.

The sequence is that of Large ribosomal subunit protein bL27 from Chlamydia trachomatis serovar L2 (strain ATCC VR-902B / DSM 19102 / 434/Bu).